The sequence spans 309 residues: Methionyl-tRNA formyltransferase (309 aa).

Residue 109–112 participates in (6S)-5,6,7,8-tetrahydrofolate binding; the sequence is SLLP.

It belongs to the Fmt family.

It catalyses the reaction L-methionyl-tRNA(fMet) + (6R)-10-formyltetrahydrofolate = N-formyl-L-methionyl-tRNA(fMet) + (6S)-5,6,7,8-tetrahydrofolate + H(+). In terms of biological role, attaches a formyl group to the free amino group of methionyl-tRNA(fMet). The formyl group appears to play a dual role in the initiator identity of N-formylmethionyl-tRNA by promoting its recognition by IF2 and preventing the misappropriation of this tRNA by the elongation apparatus. The protein is Methionyl-tRNA formyltransferase of Clostridium perfringens (strain 13 / Type A).